The primary structure comprises 1475 residues: Sex-determining transformer protein 2 (1475 aa).

A signal peptide spans 1–31 (MKLKYNKLLVSVVIVTFVTFGLLLAECFGKS). The next 11 membrane-spanning stretches (helical) occupy residues 446–466 (TIHF…IFVW), 474–494 (AFMF…VCST), 496–516 (GVIV…LANL), 589–609 (WGCT…FIDS), 737–757 (GVIL…LLFI), 902–922 (AVGV…LFAF), 928–948 (AGIF…TPTI), 952–972 (FLFS…VHLF), 979–999 (IYTN…FCAL), 1034–1054 (IAQF…ICSI), and 1060–1080 (IFFV…FNSI). The interaction with fem-3 stretch occupies residues 1133–1273 (EFSIKRSSPP…RERNLMNKRS (141 aa)). Disordered regions lie at residues 1142-1194 (PCRY…GDNT) and 1267-1330 (NLMN…VDEP). Residues 1178 to 1188 (RSPKTGNKRVR) are compositionally biased toward basic residues. Basic and acidic residues predominate over residues 1276–1310 (QRRESRNIEKMKKSQENLDKEKSEEKISESKKNQD). Residues 1392–1413 (CEDIYWTHRTGQLPPGLQVPRR) are MX regulatory domain; required for tra-1 binding. A disordered region spans residues 1424 to 1475 (TPPPEDLNWVPPAESPPIPIPQQAFDLLEERRRNHREQQDEAREGDLSDPEV). Residues 1451-1469 (LEERRRNHREQQDEAREGD) show a composition bias toward basic and acidic residues.

As to quaternary structure, interacts with tra-1 and fem-3. Post-translationally, undergoes cleavage by tra-3 to produce a feminizing carboxy-terminal isoform Tra-2B. Somatic and germline tissues. Isoform Tra-2B is specific to oocytes.

It localises to the membrane. Its function is as follows. Plays a major role in controlling sexual cell fates. Promotes female development in XX animals where it sequesters one or more of the FEM proteins to the membrane thereby freeing the tra-1 protein (a putative transcription factor) to enter the nucleus and promote female development. In XO animals it acts as a receptor for her-1 which prevents it from binding to FEM proteins thereby repressing the activity of tra-1. Negatively regulates male development when bound to fem-3 and is required together with tra-1 for promoting spermatogenesis. Also required for feminizing tra-3 activity. This is Sex-determining transformer protein 2 (tra-2) from Caenorhabditis elegans.